The sequence spans 102 residues: Large ribosomal subunit protein bL21 (102 aa).

This sequence belongs to the bacterial ribosomal protein bL21 family. Part of the 50S ribosomal subunit. Contacts protein L20.

Functionally, this protein binds to 23S rRNA in the presence of protein L20. This Listeria monocytogenes serotype 4b (strain F2365) protein is Large ribosomal subunit protein bL21.